The following is a 378-amino-acid chain: Probable methyltransferase At1g29790 (378 aa).

Over 1-6 (MAGFTM) the chain is Cytoplasmic. A helical; Signal-anchor for type II membrane protein membrane pass occupies residues 7–29 (SLNLLLLVAMVATNILSLYHLSS). At 30 to 378 (TTNFFQSTVK…TALLQKPVAR (349 aa)) the chain is on the lumenal side. The segment at 67-87 (TTHQPDKSTSTSTSRAAVSSS) is disordered. Residues 74–87 (STSTSTSRAAVSSS) are compositionally biased toward low complexity. Asn-247 carries an N-linked (GlcNAc...) asparagine glycan.

The protein belongs to the methyltransferase superfamily.

The protein resides in the golgi apparatus membrane. This is Probable methyltransferase At1g29790 from Arabidopsis thaliana (Mouse-ear cress).